The sequence spans 515 residues: MALSDLVLLRWLRDSRHSRKLILFIVFLALLLDNMLLTVVVPIIPSYLYSIKHEKNSTEIQTTRPELVVSTSESIFSYYNNSTVLITGNATGTLPGGQSHKATSTQHTVANTTVPSDCPSEDRDLLNENVQVGLLFASKATVQLLTNPFIGLLTNRIGYPIPMFAGFCIMFISTVMFAFSSSYAFLLIARSLQGIGSSCSSVAGMGMLASVYTDDEERGKPMGIALGGLAMGVLVGPPFGSVLYEFVGKTAPFLVLAALVLLDGAIQLFVLQPSRVQPESQKGTPLTTLLKDPYILIAAGSICFANMGIAMLEPALPIWMMETMCSRKWQLGVAFLPASISYLIGTNIFGILAHKMGRWLCALLGMVIVGISILCIPFAKNIYGLIAPNFGVGFAIGMVDSSMMPIMGYLVDLRHVSVYGSVYAIADVAFCMGYAIGPSAGGAIAKAIGFPWLMTIIGIIDIAFAPLCFFLRSPPAKEEKMAILMDHNCPIKRKMYTQNNVQSYPIGDDEESESD.

Residues 1 to 20 (MALSDLVLLRWLRDSRHSRK) lie on the Cytoplasmic side of the membrane. The chain crosses the membrane as a helical span at residues 21 to 41 (LILFIVFLALLLDNMLLTVVV). The Lumenal, vesicle segment spans residues 42–130 (PIIPSYLYSI…EDRDLLNENV (89 aa)). N-linked (GlcNAc...) asparagine glycans are attached at residues Asn56, Asn80, Asn81, Asn89, and Asn111. The cysteines at positions 118 and 325 are disulfide-linked. The chain crosses the membrane as a helical span at residues 131–151 (QVGLLFASKATVQLLTNPFIG). Residues 152-160 (LLTNRIGYP) are Cytoplasmic-facing. Residues 161-181 (IPMFAGFCIMFISTVMFAFSS) form a helical membrane-spanning segment. The Lumenal, vesicle portion of the chain corresponds to 182–190 (SYAFLLIAR). Residues 191-211 (SLQGIGSSCSSVAGMGMLASV) traverse the membrane as a helical segment. The Cytoplasmic portion of the chain corresponds to 212–220 (YTDDEERGK). A helical membrane pass occupies residues 221-243 (PMGIALGGLAMGVLVGPPFGSVL). 2 residues coordinate serotonin: Leu229 and Val233. The Lumenal, vesicle segment spans residues 244–249 (YEFVGK). Residues 250–272 (TAPFLVLAALVLLDGAIQLFVLQ) traverse the membrane as a helical segment. The Cytoplasmic segment spans residues 273 to 292 (PSRVQPESQKGTPLTTLLKD). Residues 293-312 (PYILIAAGSICFANMGIAML) form a helical membrane-spanning segment. The serotonin site is built by Asn306, Ile309, Glu313, Phe335, and Tyr342. Topologically, residues 313-329 (EPALPIWMMETMCSRKW) are lumenal, vesicle. A helical transmembrane segment spans residues 330 to 353 (QLGVAFLPASISYLIGTNIFGILA). Over 354 to 358 (HKMGR) the chain is Cytoplasmic. Residues 359–379 (WLCALLGMVIVGISILCIPFA) form a helical membrane-spanning segment. Residues 380 to 390 (KNIYGLIAPNF) lie on the Lumenal, vesicle side of the membrane. A helical membrane pass occupies residues 391–411 (GVGFAIGMVDSSMMPIMGYLV). Asp400 provides a ligand contact to serotonin. Topologically, residues 412–415 (DLRH) are cytoplasmic. The chain crosses the membrane as a helical span at residues 416-436 (VSVYGSVYAIADVAFCMGYAI). Tyr434 is a serotonin binding site. Residues 437–441 (GPSAG) are Lumenal, vesicle-facing. The chain crosses the membrane as a helical span at residues 442-463 (GAIAKAIGFPWLMTIIGIIDIA). Topologically, residues 464 to 515 (FAPLCFFLRSPPAKEEKMAILMDHNCPIKRKMYTQNNVQSYPIGDDEESESD) are cytoplasmic. 2 positions are modified to phosphoserine; by CK2: Ser512 and Ser514.

Belongs to the major facilitator superfamily. Vesicular transporter family. In terms of assembly, interacts with SLC6A3. Expressed in the substantia nigra and the tuberomammillary nucleus of the posterior hypothalamus. Expressed in stomach, in particular in varicose nerve fibers and enterochromaffin-like cells in the corpus region (at protein level).

It is found in the cytoplasmic vesicle. Its subcellular location is the secretory vesicle. It localises to the synaptic vesicle membrane. The protein localises to the secretory vesicle membrane. The protein resides in the cell projection. It is found in the axon. Its subcellular location is the dendrite. The catalysed reaction is serotonin(in) + 2 H(+)(out) = serotonin(out) + 2 H(+)(in). It catalyses the reaction dopamine(in) + 2 H(+)(out) = dopamine(out) + 2 H(+)(in). It carries out the reaction histamine(in) + 2 H(+)(out) = histamine(out) + 2 H(+)(in). With respect to regulation, strongly inhibited by reserpine and tetrabenazine. Also inhibited to a lesser extent by ketanserin and fenfluramine. Reserpine and ketanserin inhibit by blocking the substrate-binding pocket. Tetrabenazine traps SLC18A2/VMAT2 in an occluded conformation and its inhibition is specific to SLC18A2/VMAT2 but not SLC18A1/VMAT1. In terms of biological role, electrogenic antiporter that exchanges one cationic monoamine with two intravesicular protons across the membrane of secretory and synaptic vesicles. Uses the electrochemical proton gradient established by the V-type proton-pump ATPase to accumulate high concentrations of monoamines inside the vesicles prior to their release via exocytosis. Transports a variety of catecholamines such as dopamine, adrenaline and noradrenaline, histamine, and indolamines such as serotonin. Regulates the transvesicular monoaminergic gradient that determines the quantal size. Mediates somatodendritic dopamine release in hippocampal neurons, likely as part of a regulated secretory pathway that integrates retrograde synaptic signals. Acts as a primary transporter for striatal dopamine loading ensuring impulse-dependent release of dopamine at the synaptic cleft. Responsible for histamine and serotonin storage and subsequent corelease from mast cell granules. This Rattus norvegicus (Rat) protein is Synaptic vesicular amine transporter (Slc18a2).